The chain runs to 267 residues: 26S proteasome non-ATPase regulatory subunit 8 homolog A (267 aa).

Met1 carries the N-acetylmethionine modification. Residues 79–251 (DAFERDFFQL…APCKEIPSLQ (173 aa)) form the PCI domain.

This sequence belongs to the proteasome subunit S14 family. Component of the 19S regulatory particle (RP/PA700) lid subcomplex of the 26S proteasome. The 26S proteasome is composed of a core protease (CP), known as the 20S proteasome, capped at one or both ends by the 19S regulatory particle (RP/PA700). The RP/PA700 complex is composed of at least 17 different subunits in two subcomplexes, the base and the lid, which form the portions proximal and distal to the 20S proteolytic core, respectively. Interacts with PUB22 and PUB23. Binds to the translation initiation factors TIF3E1. Interacts with UCH1 and UCH2. Ubiquitinated by PUB22 and PUB23. Ubiquitous with highest expression in flowers.

Its function is as follows. Acts as a regulatory subunit of the 26S proteasome which is involved in the ATP-dependent degradation of ubiquitinated proteins. May help to control the degradation of one or more factors that repress cytokinin signaling. Plays an important role for balancing cell expansion with cell proliferation rates during shoot development. The protein is 26S proteasome non-ATPase regulatory subunit 8 homolog A of Arabidopsis thaliana (Mouse-ear cress).